The primary structure comprises 306 residues: Serine/threonine-protein phosphatase PP2A-1 catalytic subunit (306 aa).

Residues aspartate 54, histidine 56, aspartate 82, and asparagine 114 each contribute to the Mn(2+) site. Histidine 115 (proton donor) is an active-site residue. Mn(2+)-binding residues include histidine 164 and histidine 238.

It belongs to the PPP phosphatase family. PP-2A subfamily. The cofactor is Mn(2+).

The protein resides in the cytoplasm. The enzyme catalyses O-phospho-L-seryl-[protein] + H2O = L-seryl-[protein] + phosphate. The catalysed reaction is O-phospho-L-threonyl-[protein] + H2O = L-threonyl-[protein] + phosphate. This is Serine/threonine-protein phosphatase PP2A-1 catalytic subunit (PP2A1) from Oryza sativa subsp. indica (Rice).